The chain runs to 183 residues: Adenine phosphoribosyltransferase (183 aa).

It belongs to the purine/pyrimidine phosphoribosyltransferase family. Homodimer.

It is found in the cytoplasm. The catalysed reaction is AMP + diphosphate = 5-phospho-alpha-D-ribose 1-diphosphate + adenine. The protein operates within purine metabolism; AMP biosynthesis via salvage pathway; AMP from adenine: step 1/1. Its function is as follows. Catalyzes a salvage reaction resulting in the formation of AMP, that is energically less costly than de novo synthesis. The chain is Adenine phosphoribosyltransferase from Blochmanniella floridana.